The following is a 2301-amino-acid chain: Genome polyprotein (2301 aa).

Residues 3-14 (CKHGYPDVCPIC) fold into a zinc finger. The interval 30-46 (DGEWFPTDLLCVDLDDD) is acidic. The tract at residues 60–73 (MEWTDLPLVRDIVM) is theilo. Gly-77 is lipidated: N-myristoyl glycine; by host. Cysteines 501 and 503 form a disulfide. The tract at residues 1039 to 1045 (YYKQRLI) is host EIF4E binding. Residues 1281–1446 (IPLASLCEKF…CTTSNGMLDI (166 aa)) enclose the SF3 helicase domain. Residue 1310–1317 (GAAGQGKS) coordinates ATP. Tyr-1606 carries the post-translational modification O-(5'-phospho-RNA)-tyrosine. Residues 1634–1827 (NPVMDFELFC…AATIITRELI (194 aa)) enclose the Peptidase C3 domain. Catalysis depends on for protease 3C activity residues His-1678, Asp-1712, and Cys-1791. A RdRp catalytic domain is found at 2069-2187 (NYVYDVDYSN…GTNYQIDFNL (119 aa)). Catalysis depends on for RdRp activity residues Asp-2075 and Asp-2173.

This sequence belongs to the picornaviruses polyprotein family. Interacts with host EIF4E. Interacts with the leader protein. In terms of assembly, interacts with host RAN; the complex L-RAN recruits cellular kinases responsible for the L-induced nucleocytoplasmic trafficking inhibition. The complex L-RAN can further bind to the host exportins XPO1/CRM1 and CSE1L/CAS. Interacts with the protein 2A. Interacts with host RNASEL; this interaction prevents RNASEL activation by its substrate 2'-5' oligoadenylates. Phosphorylated. Post-translationally, specific enzymatic cleavages by the viral protease in vivo yield a variety of precursors and mature proteins. The polyprotein seems to be cotranslationally cleaved at the 2A/2B junction by a ribosomal skip from one codon to the next without formation of a peptide bond. This process would release the P1-2A peptide from the translational complex. In terms of processing, during virion maturation, immature virions are rendered infectious following cleavage of VP0 into VP4 and VP2. This maturation seems to be an autocatalytic event triggered by the presence of RNA in the capsid and is followed by a conformational change of the particle. Uridylylated by the polymerase and is covalently linked to the 5'-end of genomic RNA. This uridylylated form acts as a nucleotide-peptide primer for the polymerase. Post-translationally, myristoylation is required during RNA encapsidation and formation of the mature virus particle.

It is found in the virion. It localises to the host cytoplasm. The protein localises to the host nucleus. The protein resides in the host nucleolus. Its subcellular location is the host cytoplasmic vesicle membrane. The catalysed reaction is RNA(n) + a ribonucleoside 5'-triphosphate = RNA(n+1) + diphosphate. The enzyme catalyses ATP + H2O = ADP + phosphate + H(+). It carries out the reaction Selective cleavage of Gln-|-Gly bond in the poliovirus polyprotein. In other picornavirus reactions Glu may be substituted for Gln, and Ser or Thr for Gly.. Its function is as follows. Forms a complex with host RAN and probably binds to exportins carrying activated MAPK in order to mediate the hyperphosphorylation of host Phe/Gly containing nuclear pore proteins (Nups) resulting in cessation of active nucleocytoplasmic transport. Proteins with NLS signals fail to import, cellular mRNAs fail to export, and some proteins small enough for diffusion are not retained anymore (efflux). The resulting inhibition of cellular protein synthesis serves to ensure maximal viral gene expression and to evade host immune response. The leader protein also inhibits host interferon regulatory factor 3 (IRF3) dimerization, thereby blocking the transcriptional activation of IFN genes. Binds to host RNase L thereby preventing its activation by 2'-5' oligoadenylates in order to counteract the antiviral interferon-inducible OAS/RNase L pathway. Forms an icosahedral capsid of pseudo T=3 symmetry with capsid proteins VP2 and VP3. Together they form an icosahedral capsid composed of 60 copies of each VP1, VP2, and VP3, with a diameter of approximately 300 Angstroms. VP4 lies on the inner surface of the protein shell formed by VP1, VP2 and VP3. All the three latter proteins contain a beta-sheet structure called beta-barrel jelly roll. VP1 is situated at the 12 fivefold axes, whereas VP2 and VP3 are located at the quasi-sixfold axes. Functionally, lies on the inner surface of the capsid shell. After binding to the host receptor, the capsid undergoes conformational changes. Capsid protein VP4 is released, capsid protein VP1 N-terminus is externalized, and together, they shape a pore in the host membrane through which the viral genome is translocated into the host cell cytoplasm. After genome has been released, the channel shrinks. In terms of biological role, VP0 precursor is a component of immature procapsids. Its function is as follows. Involved in host translation shutoff by inhibiting cap-dependent mRNA translation. Nuclear localization is required for this function. The resulting inhibition of cellular protein synthesis serves to ensure maximal viral gene expression and to evade host immune response. Inhibits the phosphorylation of the leader protein. Affects membrane integrity and causes an increase in membrane permeability. Functionally, associates with and induces structural rearrangements of intracellular membranes. It displays RNA-binding, nucleotide binding and NTPase activities. In terms of biological role, serves as membrane anchor via its hydrophobic domain. Its function is as follows. Forms a primer, VPg-pU, which is utilized by the polymerase for the initiation of RNA chains. Cysteine protease that generates mature viral proteins from the precursor polyprotein. In addition to its proteolytic activity, it binds to viral RNA, and thus influences viral genome replication. RNA and substrate cooperatively bind to the protease. Cleaves host PABP1, this cleavage is important for viral replication. Functionally, replicates the genomic and antigenomic RNAs by recognizing replications specific signals. Performs VPg uridylylation. This chain is Genome polyprotein, found in Theiler's murine encephalomyelitis virus (strain DA) (TMEV).